Here is a 336-residue protein sequence, read N- to C-terminus: Aspartate--ammonia ligase (336 aa).

Belongs to the class-II aminoacyl-tRNA synthetase family. AsnA subfamily.

Its subcellular location is the cytoplasm. The catalysed reaction is L-aspartate + NH4(+) + ATP = L-asparagine + AMP + diphosphate + H(+). The protein operates within amino-acid biosynthesis; L-asparagine biosynthesis; L-asparagine from L-aspartate (ammonia route): step 1/1. This is Aspartate--ammonia ligase from Limosilactobacillus reuteri (strain DSM 20016) (Lactobacillus reuteri).